Here is a 245-residue protein sequence, read N- to C-terminus: tRNA (guanine-N(7)-)-methyltransferase (245 aa).

Positions 75, 100, 127, and 149 each coordinate S-adenosyl-L-methionine. Residue D149 is part of the active site. Substrate is bound by residues K153, D185, and 222-225; that span reads TKFE.

This sequence belongs to the class I-like SAM-binding methyltransferase superfamily. TrmB family.

The catalysed reaction is guanosine(46) in tRNA + S-adenosyl-L-methionine = N(7)-methylguanosine(46) in tRNA + S-adenosyl-L-homocysteine. Its pathway is tRNA modification; N(7)-methylguanine-tRNA biosynthesis. In terms of biological role, catalyzes the formation of N(7)-methylguanine at position 46 (m7G46) in tRNA. The sequence is that of tRNA (guanine-N(7)-)-methyltransferase from Acinetobacter baylyi (strain ATCC 33305 / BD413 / ADP1).